We begin with the raw amino-acid sequence, 448 residues long: Signal recognition particle protein (448 aa).

GTP contacts are provided by residues 101 to 108 (GLQGSGKT), 182 to 186 (DSAGR), and 240 to 243 (SKFD).

It belongs to the GTP-binding SRP family. SRP54 subfamily. Part of the signal recognition particle protein translocation system, which is composed of SRP and FtsY. SRP is a ribonucleoprotein composed of Ffh and a 4.5S RNA molecule.

Its subcellular location is the cytoplasm. The enzyme catalyses GTP + H2O = GDP + phosphate + H(+). Involved in targeting and insertion of nascent membrane proteins into the cytoplasmic membrane. Binds to the hydrophobic signal sequence of the ribosome-nascent chain (RNC) as it emerges from the ribosomes. The SRP-RNC complex is then targeted to the cytoplasmic membrane where it interacts with the SRP receptor FtsY. Interaction with FtsY leads to the transfer of the RNC complex to the Sec translocase for insertion into the membrane, the hydrolysis of GTP by both Ffh and FtsY, and the dissociation of the SRP-FtsY complex into the individual components. The sequence is that of Signal recognition particle protein from Helicobacter pylori (strain ATCC 700392 / 26695) (Campylobacter pylori).